A 215-amino-acid chain; its full sequence is Thiamine-phosphate synthase (215 aa).

Residues 40–44 (QLRIK) and Asn-72 contribute to the 4-amino-2-methyl-5-(diphosphooxymethyl)pyrimidine site. Mg(2+) is bound by residues Asp-73 and Asp-92. Ser-111 serves as a coordination point for 4-amino-2-methyl-5-(diphosphooxymethyl)pyrimidine. Residue 137–139 (TTT) participates in 2-[(2R,5Z)-2-carboxy-4-methylthiazol-5(2H)-ylidene]ethyl phosphate binding. Residue Lys-140 coordinates 4-amino-2-methyl-5-(diphosphooxymethyl)pyrimidine. 2-[(2R,5Z)-2-carboxy-4-methylthiazol-5(2H)-ylidene]ethyl phosphate-binding positions include Gly-169 and 189–190 (VS).

Belongs to the thiamine-phosphate synthase family. Requires Mg(2+) as cofactor.

It carries out the reaction 2-[(2R,5Z)-2-carboxy-4-methylthiazol-5(2H)-ylidene]ethyl phosphate + 4-amino-2-methyl-5-(diphosphooxymethyl)pyrimidine + 2 H(+) = thiamine phosphate + CO2 + diphosphate. The catalysed reaction is 2-(2-carboxy-4-methylthiazol-5-yl)ethyl phosphate + 4-amino-2-methyl-5-(diphosphooxymethyl)pyrimidine + 2 H(+) = thiamine phosphate + CO2 + diphosphate. It catalyses the reaction 4-methyl-5-(2-phosphooxyethyl)-thiazole + 4-amino-2-methyl-5-(diphosphooxymethyl)pyrimidine + H(+) = thiamine phosphate + diphosphate. It participates in cofactor biosynthesis; thiamine diphosphate biosynthesis; thiamine phosphate from 4-amino-2-methyl-5-diphosphomethylpyrimidine and 4-methyl-5-(2-phosphoethyl)-thiazole: step 1/1. Functionally, condenses 4-methyl-5-(beta-hydroxyethyl)thiazole monophosphate (THZ-P) and 2-methyl-4-amino-5-hydroxymethyl pyrimidine pyrophosphate (HMP-PP) to form thiamine monophosphate (TMP). This is Thiamine-phosphate synthase from Proteus mirabilis (strain HI4320).